A 660-amino-acid polypeptide reads, in one-letter code: Bifunctional polymyxin resistance protein ArnA (660 aa).

The tract at residues 1–304 is formyltransferase ArnAFT; that stretch reads MKAVIFAYHD…TLGLVAGARL (304 aa). The active-site Proton donor; for formyltransferase activity is the His104. (6R)-10-formyltetrahydrofolate contacts are provided by residues Arg114 and 136–140; that span reads VKRAD. The interval 314–660 is dehydrogenase ArnADH; that stretch reads RRIRVLILGV…RSVDVAERAS (347 aa). NAD(+) contacts are provided by residues Asp347 and 368 to 369; that span reads DI. UDP-alpha-D-glucuronate is bound by residues Ala393, Tyr398, and 432-433; that span reads TS. The Proton acceptor; for decarboxylase activity role is filled by Glu434. UDP-alpha-D-glucuronate-binding positions include Arg460, Asn492, 526-535, and Tyr613; that span reads KLIDGGQQKR. Arg619 functions as the Proton donor; for decarboxylase activity in the catalytic mechanism.

In the N-terminal section; belongs to the Fmt family. UDP-L-Ara4N formyltransferase subfamily. It in the C-terminal section; belongs to the NAD(P)-dependent epimerase/dehydratase family. UDP-glucuronic acid decarboxylase subfamily. As to quaternary structure, homohexamer, formed by a dimer of trimers.

It carries out the reaction UDP-alpha-D-glucuronate + NAD(+) = UDP-beta-L-threo-pentopyranos-4-ulose + CO2 + NADH. The catalysed reaction is UDP-4-amino-4-deoxy-beta-L-arabinose + (6R)-10-formyltetrahydrofolate = UDP-4-deoxy-4-formamido-beta-L-arabinose + (6S)-5,6,7,8-tetrahydrofolate + H(+). Its pathway is nucleotide-sugar biosynthesis; UDP-4-deoxy-4-formamido-beta-L-arabinose biosynthesis; UDP-4-deoxy-4-formamido-beta-L-arabinose from UDP-alpha-D-glucuronate: step 1/3. It functions in the pathway nucleotide-sugar biosynthesis; UDP-4-deoxy-4-formamido-beta-L-arabinose biosynthesis; UDP-4-deoxy-4-formamido-beta-L-arabinose from UDP-alpha-D-glucuronate: step 3/3. The protein operates within bacterial outer membrane biogenesis; lipopolysaccharide biosynthesis. Functionally, bifunctional enzyme that catalyzes the oxidative decarboxylation of UDP-glucuronic acid (UDP-GlcUA) to UDP-4-keto-arabinose (UDP-Ara4O) and the addition of a formyl group to UDP-4-amino-4-deoxy-L-arabinose (UDP-L-Ara4N) to form UDP-L-4-formamido-arabinose (UDP-L-Ara4FN). The modified arabinose is attached to lipid A and is required for resistance to polymyxin and cationic antimicrobial peptides. The chain is Bifunctional polymyxin resistance protein ArnA from Salmonella heidelberg (strain SL476).